A 221-amino-acid polypeptide reads, in one-letter code: Serine/arginine-rich splicing factor 2 (221 aa).

The residue at position 2 (S2) is an N-acetylserine. At S2 the chain carries Phosphoserine. Positions T14–Y92 constitute an RRM domain. 2 positions are modified to phosphothreonine: T22 and T25. S26 bears the Phosphoserine mark. K52 is modified (N6-acetyllysine). Positions Y92–S221 are disordered. Composition is skewed to basic residues over residues R117–S171 and S179–S189. A phosphoserine mark is found at S189, S191, S204, S206, S208, S212, and S220.

It belongs to the splicing factor SR family. In terms of assembly, interacts with CCNL1 and CCNL2. Interacts with SCAF11. Interacts with ZRSR2/U2AF1-RS2. Interacts with CCDC55 (via C-terminus). In vitro, self-associates and binds SRSF1/SFRS1 (ASF/SF2), SNRNP70 and U2AF1 but not U2AF2. Binds SREK1/SFRS12. Interacts with BRDT. In terms of processing, extensively phosphorylated on serine residues in the RS domain. Phosphorylated by SRPK2 and this causes its redistribution from the nuclear speckle to nucleoplasm and controls cell fate decision in response to cisplatin treatment. KAT5/TIP60 inhibits its phosphorylation by preventing SRPK2 nuclear translocation. Post-translationally, acetylation on Lys-52 by KAT5/TIP60 promotes its proteasomal degradation. This effect is counterbalanced by HDAC6, which positively controls SRSF2 protein level by deacetylating it and preventing its proteasomal degradation. In terms of tissue distribution, expressed in all the tissues examined; liver, kidney, spleen, heart, lung and brain.

The protein localises to the nucleus. It is found in the nucleoplasm. The protein resides in the nucleus speckle. Its function is as follows. Necessary for the splicing of pre-mRNA. It is required for formation of the earliest ATP-dependent splicing complex and interacts with spliceosomal components bound to both the 5'- and 3'-splice sites during spliceosome assembly. It also is required for ATP-dependent interactions of both U1 and U2 snRNPs with pre-mRNA. Can bind to the myelin basic protein (MBP) gene MB3 regulatory region and increase transcription of the mbp promoter in cells derived from the CNS. The phosphorylated form (by SRPK2) is required for cellular apoptosis in response to cisplatin treatment. This chain is Serine/arginine-rich splicing factor 2 (Srsf2), found in Mus musculus (Mouse).